Reading from the N-terminus, the 308-residue chain is Acetylglutamate kinase (308 aa).

Residues 86 to 87 (GG), Arg-108, and Asn-201 each bind substrate.

It belongs to the acetylglutamate kinase family. ArgB subfamily.

Its subcellular location is the cytoplasm. It catalyses the reaction N-acetyl-L-glutamate + ATP = N-acetyl-L-glutamyl 5-phosphate + ADP. It participates in amino-acid biosynthesis; L-arginine biosynthesis; N(2)-acetyl-L-ornithine from L-glutamate: step 2/4. Functionally, catalyzes the ATP-dependent phosphorylation of N-acetyl-L-glutamate. The protein is Acetylglutamate kinase of Prochlorococcus marinus (strain MIT 9303).